Reading from the N-terminus, the 232-residue chain is Ribose-5-phosphate isomerase A (232 aa).

Substrate is bound by residues 31-34, 87-90, and 100-103; these read TGST, DGAD, and KGGG. Glu109 functions as the Proton acceptor in the catalytic mechanism. Lys127 contributes to the substrate binding site.

This sequence belongs to the ribose 5-phosphate isomerase family. As to quaternary structure, homodimer.

The enzyme catalyses aldehydo-D-ribose 5-phosphate = D-ribulose 5-phosphate. Its pathway is carbohydrate degradation; pentose phosphate pathway; D-ribose 5-phosphate from D-ribulose 5-phosphate (non-oxidative stage): step 1/1. In terms of biological role, catalyzes the reversible conversion of ribose-5-phosphate to ribulose 5-phosphate. In Bifidobacterium longum subsp. infantis (strain ATCC 15697 / DSM 20088 / JCM 1222 / NCTC 11817 / S12), this protein is Ribose-5-phosphate isomerase A.